The sequence spans 711 residues: Ribosomal RNA large subunit methyltransferase K/L (711 aa).

A THUMP domain is found at 43–154; sequence TLYRTLLWSR…RENLVISLDL (112 aa).

This sequence belongs to the methyltransferase superfamily. RlmKL family.

It localises to the cytoplasm. It catalyses the reaction guanosine(2445) in 23S rRNA + S-adenosyl-L-methionine = N(2)-methylguanosine(2445) in 23S rRNA + S-adenosyl-L-homocysteine + H(+). It carries out the reaction guanosine(2069) in 23S rRNA + S-adenosyl-L-methionine = N(2)-methylguanosine(2069) in 23S rRNA + S-adenosyl-L-homocysteine + H(+). Functionally, specifically methylates the guanine in position 2445 (m2G2445) and the guanine in position 2069 (m7G2069) of 23S rRNA. The sequence is that of Ribosomal RNA large subunit methyltransferase K/L from Haemophilus influenzae (strain PittEE).